Reading from the N-terminus, the 336-residue chain is Anthranilate phosphoribosyltransferase (336 aa).

5-phospho-alpha-D-ribose 1-diphosphate is bound by residues Gly79, 82–83, Thr87, 89–92, 107–115, and Ser119; these read GD, NIST, and KHGNRSVSS. Gly79 contacts anthranilate. Position 91 (Ser91) interacts with Mg(2+). Asn110 serves as a coordination point for anthranilate. Residue Arg165 participates in anthranilate binding. Asp224 and Glu225 together coordinate Mg(2+).

It belongs to the anthranilate phosphoribosyltransferase family. As to quaternary structure, homodimer. Mg(2+) is required as a cofactor.

It catalyses the reaction N-(5-phospho-beta-D-ribosyl)anthranilate + diphosphate = 5-phospho-alpha-D-ribose 1-diphosphate + anthranilate. It functions in the pathway amino-acid biosynthesis; L-tryptophan biosynthesis; L-tryptophan from chorismate: step 2/5. In terms of biological role, catalyzes the transfer of the phosphoribosyl group of 5-phosphorylribose-1-pyrophosphate (PRPP) to anthranilate to yield N-(5'-phosphoribosyl)-anthranilate (PRA). This chain is Anthranilate phosphoribosyltransferase, found in Endomicrobium trichonymphae.